The following is a 417-amino-acid chain: UDP-N-acetylglucosamine 1-carboxyvinyltransferase (417 aa).

22-23 (KN) is a phosphoenolpyruvate binding site. Arg-93 is a UDP-N-acetyl-alpha-D-glucosamine binding site. Catalysis depends on Cys-117, which acts as the Proton donor. Cys-117 carries the post-translational modification 2-(S-cysteinyl)pyruvic acid O-phosphothioketal. Residues 122-126 (RPVDQ), Asp-304, and Ile-326 contribute to the UDP-N-acetyl-alpha-D-glucosamine site.

It belongs to the EPSP synthase family. MurA subfamily.

It is found in the cytoplasm. It catalyses the reaction phosphoenolpyruvate + UDP-N-acetyl-alpha-D-glucosamine = UDP-N-acetyl-3-O-(1-carboxyvinyl)-alpha-D-glucosamine + phosphate. The protein operates within cell wall biogenesis; peptidoglycan biosynthesis. Cell wall formation. Adds enolpyruvyl to UDP-N-acetylglucosamine. The protein is UDP-N-acetylglucosamine 1-carboxyvinyltransferase of Neisseria meningitidis serogroup A / serotype 4A (strain DSM 15465 / Z2491).